Here is a 393-residue protein sequence, read N- to C-terminus: Pre-mRNA-splicing regulator WTAP (393 aa).

Residues 240 to 393 form a disordered region; sequence QQQIQTSGNR…SSVNVQGSVL (154 aa). The span at 254 to 267 shows a compositional bias: basic and acidic residues; sequence ESKDEGETSGKDCG. Over residues 272–286 the composition is skewed to polar residues; it reads GPSNGGSSHQRTHSS. Residues 310–319 show a composition bias toward basic and acidic residues; sequence LPNHSEERTS. Positions 320–353 are enriched in polar residues; sequence RGGSSYMNQLSTGYESVDSPTGSENSLTHQSNDT. Positions 354–365 are enriched in basic and acidic residues; sequence DSNHDSQEEKPV. Residues 369–393 are compositionally biased toward polar residues; the sequence is GNRTVSSRHLQNGLDSSVNVQGSVL.

It belongs to the fl(2)d family. Component of the WMM complex, a N6-methyltransferase complex composed of a catalytic subcomplex, named MAC, and of an associated subcomplex, named MACOM. Component of the MACOM subcomplex.

It localises to the nucleus speckle. The protein resides in the nucleus. The protein localises to the nucleoplasm. Its function is as follows. Associated component of the WMM complex, a complex that mediates N6-methyladenosine (m6A) methylation of RNAs, a modification that plays a role in the efficiency of mRNA splicing and RNA processing. The protein is Pre-mRNA-splicing regulator WTAP of Xenopus tropicalis (Western clawed frog).